The following is a 176-amino-acid chain: Ribosome rescue factor SmrB (176 aa).

One can recognise a Smr domain in the interval 98-173 (LDLHGLNQYQ…NDAAIMVIIE (76 aa)).

It belongs to the SmrB family. As to quaternary structure, associates with collided ribosomes, but not with correctly translating polysomes.

Acts as a ribosome collision sensor. Detects stalled/collided disomes (pairs of ribosomes where the leading ribosome is stalled and a second ribosome has collided with it) and endonucleolytically cleaves mRNA at the 5' boundary of the stalled ribosome. Stalled/collided disomes form a new interface (primarily via the 30S subunits) that binds SmrB. Cleaved mRNA becomes available for tmRNA ligation, leading to ribosomal subunit dissociation and rescue of stalled ribosomes. This is Ribosome rescue factor SmrB from Buchnera aphidicola subsp. Schizaphis graminum (strain Sg).